We begin with the raw amino-acid sequence, 334 residues long: Aspartate carbamoyltransferase catalytic subunit (334 aa).

R71 and T72 together coordinate carbamoyl phosphate. K99 contacts L-aspartate. R121, H151, and Q154 together coordinate carbamoyl phosphate. The L-aspartate site is built by R184 and R239. Residues G280 and P281 each coordinate carbamoyl phosphate.

The protein belongs to the aspartate/ornithine carbamoyltransferase superfamily. ATCase family. Heterododecamer (2C3:3R2) of six catalytic PyrB chains organized as two trimers (C3), and six regulatory PyrI chains organized as three dimers (R2).

The enzyme catalyses carbamoyl phosphate + L-aspartate = N-carbamoyl-L-aspartate + phosphate + H(+). It participates in pyrimidine metabolism; UMP biosynthesis via de novo pathway; (S)-dihydroorotate from bicarbonate: step 2/3. In terms of biological role, catalyzes the condensation of carbamoyl phosphate and aspartate to form carbamoyl aspartate and inorganic phosphate, the committed step in the de novo pyrimidine nucleotide biosynthesis pathway. The sequence is that of Aspartate carbamoyltransferase catalytic subunit from Pseudomonas fluorescens (strain Pf0-1).